A 623-amino-acid chain; its full sequence is DNA polymerase alpha subunit B (623 aa).

The tract at residues 113–151 is disordered; it reads IPKIKDEPSSSVDVSTARNKNNHNNNNNNNPSLPNKSMF. Polar residues predominate over residues 121-130; it reads SSSVDVSTAR.

The protein belongs to the DNA polymerase alpha subunit B family. As to quaternary structure, DNA polymerase alpha:primase is a four subunit enzyme complex, which is assembled throughout the cell cycle, and consists of the two DNA polymerase subunits A and B, and the DNA primase large and small subunits. Subunit B binds to subunit A.

The protein resides in the nucleus. May play an essential role at the early stage of chromosomal DNA replication by coupling the polymerase alpha/primase complex to the cellular replication machinery. This chain is DNA polymerase alpha subunit B (polA2), found in Dictyostelium discoideum (Social amoeba).